The primary structure comprises 159 residues: Serine-protein kinase RsbW (159 aa).

This sequence belongs to the anti-sigma-factor family.

The catalysed reaction is L-seryl-[protein] + ATP = O-phospho-L-seryl-[protein] + ADP + H(+). It carries out the reaction L-threonyl-[protein] + ATP = O-phospho-L-threonyl-[protein] + ADP + H(+). Negative regulator of sigma-B activity. Phosphorylates and inactivates its specific antagonist protein, RsbV. Upon phosphorylation of RsbV, RsbW is released and binds to sigma-B, thereby blocking its ability to form an RNA polymerase holoenzyme (E-sigma-B). In Staphylococcus epidermidis, this protein is Serine-protein kinase RsbW.